The chain runs to 455 residues: N-lysine methyltransferase setd6 (455 aa).

An SET domain is found at 38-266 (PKVYISTEGT…AGQELFNTYG (229 aa)).

It belongs to the class V-like SAM-binding methyltransferase superfamily. Histone-lysine methyltransferase family. SETD6 subfamily.

Its subcellular location is the nucleus. Functionally, protein-lysine N-methyltransferase. This Xenopus laevis (African clawed frog) protein is N-lysine methyltransferase setd6 (setd6).